The chain runs to 359 residues: Peptide chain release factor 1 (359 aa).

At glutamine 235 the chain carries N5-methylglutamine. The interval 284–311 (KAESERSASRKNQVGSGDRSERIRTYNF) is disordered.

This sequence belongs to the prokaryotic/mitochondrial release factor family. Methylated by PrmC. Methylation increases the termination efficiency of RF1.

It localises to the cytoplasm. In terms of biological role, peptide chain release factor 1 directs the termination of translation in response to the peptide chain termination codons UAG and UAA. This Bartonella quintana (strain Toulouse) (Rochalimaea quintana) protein is Peptide chain release factor 1.